The sequence spans 538 residues: Chaperonin GroEL (538 aa).

Residues threonine 29–proline 32, aspartate 86–threonine 90, glycine 413, asparagine 476–alanine 478, and aspartate 492 contribute to the ATP site.

The protein belongs to the chaperonin (HSP60) family. In terms of assembly, forms a cylinder of 14 subunits composed of two heptameric rings stacked back-to-back. Interacts with the co-chaperonin GroES.

It is found in the cytoplasm. It catalyses the reaction ATP + H2O + a folded polypeptide = ADP + phosphate + an unfolded polypeptide.. Functionally, together with its co-chaperonin GroES, plays an essential role in assisting protein folding. The GroEL-GroES system forms a nano-cage that allows encapsulation of the non-native substrate proteins and provides a physical environment optimized to promote and accelerate protein folding. The protein is Chaperonin GroEL of Staphylococcus aureus (strain bovine RF122 / ET3-1).